We begin with the raw amino-acid sequence, 473 residues long: Monocarboxylate transporter 4 (473 aa).

Over 1–17 the chain is Cytoplasmic; the sequence is MGAVVVDDGPSGVKAPD. A helical membrane pass occupies residues 18-38; sequence GGWGWAVLFGCFIITGFSYAF. The Extracellular segment spans residues 39-61; it reads PKAVSVFFKELIREFGVGYSDTA. The chain crosses the membrane as a helical span at residues 62-82; the sequence is WISSILLAMLYGTGPLCSVCV. Residues 83-91 are Cytoplasmic-facing; the sequence is NRFGCRPVM. A helical membrane pass occupies residues 92-112; sequence LVGGLFASMGMVIASFCTSIV. Topologically, residues 113–115 are extracellular; the sequence is QIY. The helical transmembrane segment at 116-136 threads the bilayer; sequence LTAGVITGLGLALNFQPSLIM. The Cytoplasmic portion of the chain corresponds to 137–149; it reads LNRYFDKRRPLAN. The chain crosses the membrane as a helical span at residues 150–170; the sequence is GLSAAGSPVFLCALSPLGQIL. The Extracellular segment spans residues 171-179; sequence QHEYGWRGG. A helical transmembrane segment spans residues 180 to 200; that stretch reads FLILGGMLLNCCVCGALMRPL. Over 201–231 the chain is Cytoplasmic; sequence EPPKKSEATKEPAEKKAKKKLLDFSVFKDGG. A helical transmembrane segment spans residues 232 to 252; it reads FVIYTLAASIMVLGLFVPPVF. Topologically, residues 253 to 268 are extracellular; sequence VVSYAKDLGYQDTKAA. A helical membrane pass occupies residues 269 to 289; the sequence is FLLTILGFIDIFARPICGMVA. At 290-297 the chain is on the cytoplasmic side; that stretch reads GLKWVRPR. Residues 298 to 318 form a helical membrane-spanning segment; the sequence is CVYLFSFAMIFNGFTDLMGSM. The Extracellular segment spans residues 319-321; that stretch reads SVD. The helical transmembrane segment at 322-342 threads the bilayer; the sequence is YGGLVVFCIFFGISYGMVGAL. Residues 343–358 lie on the Cytoplasmic side of the membrane; the sequence is QFEVLMAIVGTQKFSS. Residues 359 to 379 form a helical membrane-spanning segment; that stretch reads AIGLVLLAEAMAVLIGPPSAG. Residues 380–388 are Extracellular-facing; that stretch reads KLLDLTRRY. The chain crosses the membrane as a helical span at residues 389 to 409; sequence MFVFIIAGIEVTTSALVLALG. Over 410-473 the chain is Cytoplasmic; the sequence is NFFCIKKKPA…EVVTNPETCV (64 aa). The tract at residues 421-447 is disordered; it reads PHTKEAAAEREELNKSEDKTPEDAKVD. 2 basolateral sorting signal regions span residues 427-449 and 449-473; these read AAER…VDSI and IEVE…ETCV.

The protein belongs to the major facilitator superfamily. Monocarboxylate porter (TC 2.A.1.13) family. As to quaternary structure, interacts with BSG; interaction mediates SLC16A3 targeting to the plasma membrane.

The protein localises to the cell membrane. It is found in the basolateral cell membrane. It catalyses the reaction (S)-lactate(in) + H(+)(in) = (S)-lactate(out) + H(+)(out). It carries out the reaction pyruvate(out) + H(+)(out) = pyruvate(in) + H(+)(in). In terms of biological role, proton-dependent transporter of monocarboxylates such as L-lactate and pyruvate. Plays a predominant role in the L-lactate efflux from highly glycolytic cells. In Gallus gallus (Chicken), this protein is Monocarboxylate transporter 4 (SLC16A3).